We begin with the raw amino-acid sequence, 122 residues long: Large ribosomal subunit protein uL14 (122 aa).

Belongs to the universal ribosomal protein uL14 family. As to quaternary structure, part of the 50S ribosomal subunit. Forms a cluster with proteins L3 and L19. In the 70S ribosome, L14 and L19 interact and together make contacts with the 16S rRNA in bridges B5 and B8.

Binds to 23S rRNA. Forms part of two intersubunit bridges in the 70S ribosome. In Bifidobacterium adolescentis (strain ATCC 15703 / DSM 20083 / NCTC 11814 / E194a), this protein is Large ribosomal subunit protein uL14.